The chain runs to 544 residues: Chaperonin GroEL (544 aa).

ATP contacts are provided by residues 30 to 33 (TLGP), Lys-51, 87 to 91 (DGTTT), Gly-415, 478 to 480 (NAA), and Asp-494.

Belongs to the chaperonin (HSP60) family. As to quaternary structure, forms a cylinder of 14 subunits composed of two heptameric rings stacked back-to-back. Interacts with the co-chaperonin GroES.

It is found in the cytoplasm. It catalyses the reaction ATP + H2O + a folded polypeptide = ADP + phosphate + an unfolded polypeptide.. Functionally, together with its co-chaperonin GroES, plays an essential role in assisting protein folding. The GroEL-GroES system forms a nano-cage that allows encapsulation of the non-native substrate proteins and provides a physical environment optimized to promote and accelerate protein folding. This chain is Chaperonin GroEL, found in Geobacter sulfurreducens (strain ATCC 51573 / DSM 12127 / PCA).